The sequence spans 545 residues: Tripartite motif-containing protein 55 (545 aa).

An RING-type zinc finger spans residues 26-82 (CPICLEMFTKPVVILPCQHNLCRKCASDIFQASNPYLPTRGGTTVASGGRFRCPSCR). The B box-type zinc-finger motif lies at 119 to 161 (LDQPMCEEHEEERINIYCLNCEVPTCSLCKVFGAHKDCQVAPL). 4 residues coordinate Zn(2+): cysteine 124, histidine 127, cysteine 147, and histidine 153. Positions 219 to 258 (YSILEERKTEMTQAITRTQEEKLEHVRTLIRKYSDHLENV) form a coiled coil. The 59-residue stretch at 269–327 (MDEPEMAVFLQNAKTLLQKITEASKAFQMEKIEQGYEIMNNFTVNLNREEKIIREIDFS) folds into the COS domain. Disordered stretches follow at residues 324-378 (IDFS…SELA) and 406-528 (LVTQ…GADS). Residues 328 to 355 (REEEDEDDEGEVDEEGEGEDAVEVEEAE) are compositionally biased toward acidic residues. Low complexity-rich tracts occupy residues 417–426 (SQQTTQSETS) and 469–493 (SAAEDSSVQSAEVAEAAANEQAAVS). Residues 495-506 (KESSSTAATSQI) are compositionally biased toward polar residues. A compositionally biased stretch (low complexity) spans 510-520 (ASSPQGQAAAL).

As to quaternary structure, homooligomer and heterooligomer. Interacts with titin/TTN. Interacts with myosins. Interacts with SQSTM1 and NBR1. Probably interacts with TRIM63 and TRIM54. Post-translationally, targeted for degradation through the proteasomal and lysosomal pathways in the presence of SUMO3.

The protein localises to the nucleus. Its subcellular location is the cytoplasm. The catalysed reaction is S-ubiquitinyl-[E2 ubiquitin-conjugating enzyme]-L-cysteine + [acceptor protein]-L-lysine = [E2 ubiquitin-conjugating enzyme]-L-cysteine + N(6)-ubiquitinyl-[acceptor protein]-L-lysine.. In terms of biological role, E3 ubiquitin ligase that plays an important role in regulating cardiac development and contractility, muscle growth, metabolism, and fiber-type differentiation. Acts as a critical factor that regulates cardiomyocyte size during development in concert with TRIM63 by regulating E2F1-mediated gene expression. Plays a role in apoptosis induction in cardiomyocytes by promoting ubiquitination of the DUSP1 phosphatase. Promotes non-canonical NF-kappa-B signaling and B-cell-mediated immune responses by mediating NFKB2 'Lys-48'-linked ubiquitination and processing. In turn, NFKB2 is further processed by valosin-containing protein/VCP, an ATPase that mediates ubiquitin-dependent protein degradation by the proteasome. May play a role in preventing macrophages from producing inflammatory factors and migrating by downregulating the level of nuclear NF-kappa-B subunit RELA. Also modifies PPARG via polyubiquitination and accelerates PPARG proteasomal degradation to inhibit its activity. The polypeptide is Tripartite motif-containing protein 55 (Trim55) (Rattus norvegicus (Rat)).